The primary structure comprises 54 residues: Rubredoxin (54 aa).

The residue at position 1 (methionine 1) is an N-formylmethionine. Residues 1 to 54 form the Rubredoxin-like domain; that stretch reads MKKYTCTVCGYIYNPEDGDPDNGVNPGTDFKDIPDDWVCPLCGVGKDQFEEVEE. Cysteine 6, cysteine 9, cysteine 39, and cysteine 42 together coordinate Fe cation.

The protein belongs to the rubredoxin family. Fe(3+) is required as a cofactor.

Functionally, rubredoxin is a small nonheme, iron protein lacking acid-labile sulfide. Its single Fe, chelated to 4 Cys, functions as an electron acceptor and may also stabilize the conformation of the molecule. The sequence is that of Rubredoxin from Clostridium pasteurianum.